Reading from the N-terminus, the 220-residue chain is Iron-sulfur flavoprotein AF_1436 (220 aa).

Residues Cys-47, Cys-50, Cys-53, and Cys-59 each coordinate [4Fe-4S] cluster.

The protein belongs to the SsuE family. Isf subfamily. As to quaternary structure, homodimer. It depends on FMN as a cofactor. The cofactor is [4Fe-4S] cluster.

Redox-active protein probably involved in electron transport. This Archaeoglobus fulgidus (strain ATCC 49558 / DSM 4304 / JCM 9628 / NBRC 100126 / VC-16) protein is Iron-sulfur flavoprotein AF_1436.